The following is a 225-amino-acid chain: Ribonuclease HII (225 aa).

In terms of domain architecture, RNase H type-2 spans 28-220 (DIIAGTDEVG…VKEYVDISQE (193 aa)). 3 residues coordinate a divalent metal cation: Asp34, Glu35, and Asp129.

The protein belongs to the RNase HII family. Requires Mn(2+) as cofactor. The cofactor is Mg(2+).

The protein localises to the cytoplasm. The enzyme catalyses Endonucleolytic cleavage to 5'-phosphomonoester.. Its function is as follows. Endonuclease that specifically degrades the RNA of RNA-DNA hybrids. This chain is Ribonuclease HII, found in Desulfotalea psychrophila (strain LSv54 / DSM 12343).